The chain runs to 171 residues: Putative pre-16S rRNA nuclease (171 aa).

The protein belongs to the YqgF nuclease family.

It is found in the cytoplasm. Its function is as follows. Could be a nuclease involved in processing of the 5'-end of pre-16S rRNA. This Corynebacterium diphtheriae (strain ATCC 700971 / NCTC 13129 / Biotype gravis) protein is Putative pre-16S rRNA nuclease.